The sequence spans 399 residues: MLAAVMDYFRSCWGPRSPAGHRVRGSDVAGRQDGLLWYKDAGQLVTGEFSMAVVQANNLLEDQSQVESGALSMAEPGPQGTFIGVYDGHGGPETARFINDHMFHHLRRFATEHKCMSTDVIRKAFQATEEGFLSLVSKQWSLKPQIAAVGSCCLVGVICSGTLYVANLGDSRAVLGRFVKSTGEVVATQLSSEHNACYEEVRQELQASHPDDPQIVVLKHNVWRVKGLIQISRSIGDVYLKRPEYNREPLHSKFRLRETFKRPILSSEPAIAVHQIQPNDHFVIFASDGLWEHLSNQEAVDLVQNNPRNGIARRLVKVAMQEAAKKREMRYSDLKKIDRGVRRHFHDDITVIVVFLDSNAISKANWSRGPSVSLRGGGVTLPANSLAPFSTPTVLSSTY.

Residues 48–356 (EFSMAVVQAN…DDITVIVVFL (309 aa)) form the PPM-type phosphatase domain. Mn(2+) is bound by residues D87, G88, D288, and D347.

Belongs to the PP2C family. The cofactor is Mg(2+). Mn(2+) serves as cofactor.

It catalyses the reaction O-phospho-L-seryl-[protein] + H2O = L-seryl-[protein] + phosphate. The enzyme catalyses O-phospho-L-threonyl-[protein] + H2O = L-threonyl-[protein] + phosphate. In Oryza sativa subsp. japonica (Rice), this protein is Probable protein phosphatase 2C 28.